Here is a 234-residue protein sequence, read N- to C-terminus: Large ribosomal subunit protein uL1 (234 aa).

The protein belongs to the universal ribosomal protein uL1 family. As to quaternary structure, part of the 50S ribosomal subunit.

Binds directly to 23S rRNA. The L1 stalk is quite mobile in the ribosome, and is involved in E site tRNA release. In terms of biological role, protein L1 is also a translational repressor protein, it controls the translation of the L11 operon by binding to its mRNA. The protein is Large ribosomal subunit protein uL1 of Geobacter metallireducens (strain ATCC 53774 / DSM 7210 / GS-15).